The chain runs to 334 residues: Probable fructose-bisphosphate aldolase class 1 (334 aa).

The protein belongs to the class I fructose-bisphosphate aldolase family.

The catalysed reaction is beta-D-fructose 1,6-bisphosphate = D-glyceraldehyde 3-phosphate + dihydroxyacetone phosphate. The protein operates within carbohydrate degradation; glycolysis; D-glyceraldehyde 3-phosphate and glycerone phosphate from D-glucose: step 4/4. The polypeptide is Probable fructose-bisphosphate aldolase class 1 (Xanthomonas axonopodis pv. citri (strain 306)).